Here is a 446-residue protein sequence, read N- to C-terminus: Histidine--tRNA ligase (446 aa).

The protein belongs to the class-II aminoacyl-tRNA synthetase family. In terms of assembly, homodimer.

Its subcellular location is the cytoplasm. It carries out the reaction tRNA(His) + L-histidine + ATP = L-histidyl-tRNA(His) + AMP + diphosphate + H(+). This is Histidine--tRNA ligase from Burkholderia pseudomallei (strain K96243).